Consider the following 140-residue polypeptide: Mercuric transport protein MerC (140 aa).

At 2–10 (GLMTRIADK) the chain is on the cytoplasmic side. The chain crosses the membrane as a helical span at residues 11–31 (TGALGSVVSAMGCAACFPALA). Positions 22 and 25 each coordinate Hg(2+). Over 32 to 46 (SFGAAIGLGFLSQYE) the chain is Periplasmic. A helical membrane pass occupies residues 47 to 67 (GLFISRLLPLFAALAFLANAL). The Cytoplasmic segment spans residues 68-78 (GWFSHRQWLRS). A helical transmembrane segment spans residues 79 to 99 (LLGMIGPAIVFAATVWLLGNW). Topologically, residues 100–106 (WTANLMY) are periplasmic. A helical transmembrane segment spans residues 107–127 (VGLALMIGVSIWDFVSPAHRR). Topologically, residues 128–140 (CGPDGCELPAKRL) are cytoplasmic.

The protein localises to the cell inner membrane. Its activity is regulated as follows. Uptake of Hg(2+) is decreased by iodoacetamide and iodoacetate, and is completely inhibited by the thiol-modifying reagent N-ethylmaleimide (NEM). In terms of biological role, involved in mercuric ion uptake and binding. MerC-mediated Hg(2+) uptake does not require MerP. The polypeptide is Mercuric transport protein MerC (Shigella flexneri).